We begin with the raw amino-acid sequence, 593 residues long: Gamma-humulene synthase (593 aa).

The span at Met-1 to His-26 shows a compositional bias: polar residues. The tract at residues Met-1–Arg-34 is disordered. The Mg(2+) site is built by Asp-343, Asp-347, Asp-488, and Glu-496. The DDXXD motif signature appears at Asp-343 to Asp-347.

The protein belongs to the terpene synthase family. Tpsd subfamily. Mg(2+) serves as cofactor. K(+) is required as a cofactor.

It localises to the cytoplasm. The catalysed reaction is (2E,6E)-farnesyl diphosphate = gamma-humulene + diphosphate. The enzyme catalyses (2E,6E)-farnesyl diphosphate = sibirene + diphosphate. It catalyses the reaction (2E,6E)-farnesyl diphosphate = longifolene + diphosphate. It carries out the reaction (2E,6E)-farnesyl diphosphate = beta-himachalene + diphosphate. The catalysed reaction is (2E,6E)-farnesyl diphosphate = gamma-himachalene + diphosphate. The enzyme catalyses (2E,6E)-farnesyl diphosphate = alpha-himachalene + diphosphate. The protein operates within terpene metabolism; oleoresin biosynthesis. Involved in defensive oleoresin formation in conifers in response to insect attack or other injury. Involved in 52 sesquiterpene (C15) olefins biosynthesis. This chain is Gamma-humulene synthase (ag5), found in Abies grandis (Grand fir).